Reading from the N-terminus, the 37-residue chain is Large ribosomal subunit protein bL36 (37 aa).

The protein belongs to the bacterial ribosomal protein bL36 family.

This chain is Large ribosomal subunit protein bL36, found in Clostridioides difficile (strain 630) (Peptoclostridium difficile).